Consider the following 264-residue polypeptide: Thymidylate synthase (264 aa).

R21 provides a ligand contact to dUMP. H51 contributes to the (6R)-5,10-methylene-5,6,7,8-tetrahydrofolate binding site. 126–127 is a dUMP binding site; that stretch reads RR. Residue C146 is the Nucleophile of the active site. DUMP is bound by residues 166-169, N177, and 207-209; these read RSCD and HLY. Position 169 (D169) interacts with (6R)-5,10-methylene-5,6,7,8-tetrahydrofolate. Residue A263 participates in (6R)-5,10-methylene-5,6,7,8-tetrahydrofolate binding.

It belongs to the thymidylate synthase family. Bacterial-type ThyA subfamily. In terms of assembly, homodimer.

The protein localises to the cytoplasm. The enzyme catalyses dUMP + (6R)-5,10-methylene-5,6,7,8-tetrahydrofolate = 7,8-dihydrofolate + dTMP. Its pathway is pyrimidine metabolism; dTTP biosynthesis. Functionally, catalyzes the reductive methylation of 2'-deoxyuridine-5'-monophosphate (dUMP) to 2'-deoxythymidine-5'-monophosphate (dTMP) while utilizing 5,10-methylenetetrahydrofolate (mTHF) as the methyl donor and reductant in the reaction, yielding dihydrofolate (DHF) as a by-product. This enzymatic reaction provides an intracellular de novo source of dTMP, an essential precursor for DNA biosynthesis. This is Thymidylate synthase from Shewanella sp. (strain MR-4).